A 333-amino-acid chain; its full sequence is Protein farnesyltransferase/geranylgeranyltransferase type-1 subunit alpha (333 aa).

5 PFTA repeats span residues 61-95 (LSSR…SLKV), 96-130 (DLHV…KLGP), 132-166 (ARNS…NLGG), 167-200 (WEDE…RSPV), and 207-241 (MRES…DEST).

This sequence belongs to the protein prenyltransferase subunit alpha family. Heterodimer of FTA and FTB (farnesyltransferase). Heterodimer of an alpha and a beta subunit. Mg(2+) serves as cofactor.

The catalysed reaction is L-cysteinyl-[protein] + (2E,6E)-farnesyl diphosphate = S-(2E,6E)-farnesyl-L-cysteinyl-[protein] + diphosphate. It carries out the reaction geranylgeranyl diphosphate + L-cysteinyl-[protein] = S-geranylgeranyl-L-cysteinyl-[protein] + diphosphate. Functionally, essential subunit of both the farnesyltransferase and the geranylgeranyltransferase complex. Contributes to the transfer of a farnesyl or geranylgeranyl moiety from farnesyl or geranylgeranyl diphosphate to a cysteine at the fourth position from the C-terminus of several proteins having the C-terminal sequence Cys-aliphatic-aliphatic-X. The polypeptide is Protein farnesyltransferase/geranylgeranyltransferase type-1 subunit alpha (FTA) (Pisum sativum (Garden pea)).